The chain runs to 64 residues: Large ribosomal subunit protein eL37 (64 aa).

The Zn(2+) site is built by C20, C23, C35, and C38. A C4-type zinc finger spans residues 20–38 (CRRCGRRSFHVRKKVCAAC).

Belongs to the eukaryotic ribosomal protein eL37 family. It depends on Zn(2+) as a cofactor.

Functionally, binds to the 23S rRNA. The protein is Large ribosomal subunit protein eL37 of Methanococcus maripaludis (strain C5 / ATCC BAA-1333).